Here is a 215-residue protein sequence, read N- to C-terminus: 23.2 kDa heat shock protein (215 aa).

The signal sequence occupies residues 1–27; it reads MASMRTAAAAAMLACIAVVLASTAADG. The region spanning 69–189 is the sHSP domain; the sequence is DVAMLSMARV…GPRVVGIASA (121 aa). The tract at residues 183-215 is disordered; it reads VVGIASAGGDDGGKKSIGGAGEGQNQQAKKVEL. Polar residues predominate over residues 205 to 215; the sequence is GQNQQAKKVEL.

It belongs to the small heat shock protein (HSP20) family. In terms of assembly, may form oligomeric structures.

The protein localises to the endoplasmic reticulum. In Oryza sativa subsp. japonica (Rice), this protein is 23.2 kDa heat shock protein (HSP23.2).